Consider the following 48-residue polypeptide: SPbeta prophage-derived uncharacterized protein YotE (48 aa).

In Bacillus subtilis (strain 168), this protein is SPbeta prophage-derived uncharacterized protein YotE (yotE).